Reading from the N-terminus, the 150-residue chain is Endoribonuclease YbeY (150 aa).

Residues His-113, His-117, and His-123 each coordinate Zn(2+).

The protein belongs to the endoribonuclease YbeY family. The cofactor is Zn(2+).

Its subcellular location is the cytoplasm. In terms of biological role, single strand-specific metallo-endoribonuclease involved in late-stage 70S ribosome quality control and in maturation of the 3' terminus of the 16S rRNA. This chain is Endoribonuclease YbeY, found in Wolbachia sp. subsp. Drosophila simulans (strain wRi).